Reading from the N-terminus, the 90-residue chain is DNA-binding protein HU-alpha (90 aa).

It belongs to the bacterial histone-like protein family. In terms of assembly, heterodimer of an alpha and a beta chain.

Functionally, histone-like DNA-binding protein which is capable of wrapping DNA to stabilize it, and thus to prevent its denaturation under extreme environmental conditions. The chain is DNA-binding protein HU-alpha (hupA) from Serratia marcescens.